The primary structure comprises 287 residues: Nucleotide-binding protein Ajs_0902 (287 aa).

ATP is bound at residue 10 to 17; sequence GMSGSGKS. Residue 59–62 participates in GTP binding; sequence DVRS.

Belongs to the RapZ-like family.

In terms of biological role, displays ATPase and GTPase activities. The sequence is that of Nucleotide-binding protein Ajs_0902 from Acidovorax sp. (strain JS42).